The chain runs to 464 residues: Dihydrolipoyl dehydrogenase (464 aa).

FAD contacts are provided by residues 36–44 (EGAALGGTC), Lys-53, and Ala-119. A disulfide bridge links Cys-44 with Cys-49. Residues 184-188 (GGGYI), Glu-207, and 269-272 (AVGR) contribute to the NAD(+) site. 2 residues coordinate FAD: Asp-311 and Ala-319. Residue His-443 is the Proton acceptor of the active site.

It belongs to the class-I pyridine nucleotide-disulfide oxidoreductase family. Homodimer. Requires FAD as cofactor.

It localises to the cytoplasm. It catalyses the reaction N(6)-[(R)-dihydrolipoyl]-L-lysyl-[protein] + NAD(+) = N(6)-[(R)-lipoyl]-L-lysyl-[protein] + NADH + H(+). The branched-chain alpha-keto dehydrogenase complex catalyzes the overall conversion of alpha-keto acids to acyl-CoA and CO(2). It contains multiple copies of 3 enzymatic components: branched-chain alpha-keto acid decarboxylase (E1), lipoamide acyltransferase (E2) and lipoamide dehydrogenase (E3). This chain is Dihydrolipoyl dehydrogenase, found in Pseudomonas aeruginosa (strain ATCC 15692 / DSM 22644 / CIP 104116 / JCM 14847 / LMG 12228 / 1C / PRS 101 / PAO1).